The chain runs to 210 residues: Prohead protease (210 aa).

Positions 1 to 23 are excised as a propeptide; sequence MTQAAIDYNKLKSAPVHLDAYIK. Residues His-76, Ser-122, and Glu-148 contribute to the active site. Residues 167 to 210 constitute a propeptide that is removed on maturation; that stretch reads SMNGHDYTEWRKSFTAISSKAVPAQERNLSELEKLAIALGYVKE.

Belongs to the HK97 prohead protease protein family. In terms of processing, cleaves itself autocatalytically to yield the mature form of the protease.

The protein resides in the virion. Its function is as follows. Serine protease involved in capsid assembly and maturation. Cleaves the major capsid protein, the decoration protein, the portal protein to yield mature procapsids competent for DNA packaging. Acts as a trigger for assembly of the capsid protein. This chain is Prohead protease, found in Escherichia coli (Enterobacteria phage T5).